Here is a 239-residue protein sequence, read N- to C-terminus: Tetraspanin-9 (239 aa).

Over methionine 1–methionine 13 the chain is Cytoplasmic. Residues phenylalanine 14 to leucine 34 form a helical membrane-spanning segment. Residues serine 35–asparagine 55 lie on the Extracellular side of the membrane. A helical membrane pass occupies residues leucine 56–isoleucine 76. The Cytoplasmic portion of the chain corresponds to lysine 77–serine 85. The helical transmembrane segment at phenylalanine 86–valine 106 threads the bilayer. The Extracellular segment spans residues tyrosine 107–histidine 203. A glycan (N-linked (GlcNAc...) asparagine) is linked at asparagine 180. The helical transmembrane segment at valine 204–methionine 224 threads the bilayer. Over threonine 225–alanine 239 the chain is Cytoplasmic.

It belongs to the tetraspanin (TM4SF) family. In terms of assembly, found in a complex with GP6. Glycosylated. As to expression, expressed in megakaryocytes and platelets (at protein level).

The protein localises to the membrane. In Homo sapiens (Human), this protein is Tetraspanin-9 (TSPAN9).